Here is a 169-residue protein sequence, read N- to C-terminus: Putative glycine cleavage system H protein, mitochondrial (169 aa).

One can recognise a Lipoyl-binding domain in the interval 60-142 (VGTVGITSYA…EEEGWICKIK (83 aa)). An N6-lipoyllysine modification is found at lysine 101. Phosphoserine is present on serine 131.

The protein belongs to the GcvH family. In terms of assembly, component of the glycine decarboxylase complex (GDC), which is composed of four proteins: P, T, L and H. (R)-lipoate serves as cofactor.

It localises to the mitochondrion. The glycine cleavage system (glycine decarboxylase complex) catalyzes the degradation of glycine. The H protein shuttles the methylamine group of glycine from the P protein to the T protein. The chain is Putative glycine cleavage system H protein, mitochondrial (gcv3) from Schizosaccharomyces pombe (strain 972 / ATCC 24843) (Fission yeast).